The primary structure comprises 438 residues: Protein SPMIP7 (438 aa).

Testis-specific.

Functionally, essential for normal spermatogenesis. This chain is Protein SPMIP7, found in Homo sapiens (Human).